A 413-amino-acid chain; its full sequence is Multifunctional CCA protein (413 aa).

The ATP site is built by G8 and R11. 2 residues coordinate CTP: G8 and R11. Mg(2+) is bound by residues D21 and D23. The ATP site is built by R91, R141, and R144. Residues R91, R141, and R144 each contribute to the CTP site. Residues 230-331 form the HD domain; that stretch reads TGAHLLLVLD…VRLLERCDAL (102 aa).

The protein belongs to the tRNA nucleotidyltransferase/poly(A) polymerase family. Bacterial CCA-adding enzyme type 1 subfamily. As to quaternary structure, monomer. Can also form homodimers and oligomers. Requires Mg(2+) as cofactor. The cofactor is Ni(2+).

It catalyses the reaction a tRNA precursor + 2 CTP + ATP = a tRNA with a 3' CCA end + 3 diphosphate. It carries out the reaction a tRNA with a 3' CCA end + 2 CTP + ATP = a tRNA with a 3' CCACCA end + 3 diphosphate. In terms of biological role, catalyzes the addition and repair of the essential 3'-terminal CCA sequence in tRNAs without using a nucleic acid template. Adds these three nucleotides in the order of C, C, and A to the tRNA nucleotide-73, using CTP and ATP as substrates and producing inorganic pyrophosphate. tRNA 3'-terminal CCA addition is required both for tRNA processing and repair. Also involved in tRNA surveillance by mediating tandem CCA addition to generate a CCACCA at the 3' terminus of unstable tRNAs. While stable tRNAs receive only 3'-terminal CCA, unstable tRNAs are marked with CCACCA and rapidly degraded. This Verminephrobacter eiseniae (strain EF01-2) protein is Multifunctional CCA protein.